Consider the following 606-residue polypeptide: MALRLPASKAAEVAIGSIGCGYDLAIDLRLKYCKGGSKDSRLLDIKEGDDNCEIVLPGGISIPNVSKSIKCDKGERMRFRSDILPFQQMAEQFNQELSLAGKIPSGLFNAMFEFSSCWQKDAAYTKNLAFDGVFISLYSVALDKSQVLLREHVKQAVPSTWDPAALARFIDIYGTHIIVSVKMGGKDVIYAKQQHSSKLQPEDLQKRLKEVADKRFVEASVVHNTGSERVQASSKVETKEQRLRFADTSSLGSYANKEDYVFMCKRRGGNDNRNLMHNEWLQTVQMEPDVISMSFIPITSLLNGVPGSGFLSHAINLYLRYKPPIEELHQFLEFQLPRQWAPVFSELPLGPQRKQQSCASLQFSFFGPKLYVNTTPVDVGKRPITGMRLYLEGRRSNRLAIHLQHLSSLPKIYQLEDDLNRSIRQESHDRRYYEKVNWKNYSHVCTEPVESDDDLSVVTGAQLHVESHGFKNVLFLRLCFSRVVGATLVKNSEWDEAVGFAPKSGLISTLISHHFTAAQKPPPRPADVNINSAIYPGGPPVPTQAPKLLKFVDTSEMTRGPQESPGYWVVSGARLLVEKGKISLKVKYSLFTPILGDEVIEEAYEG.

The MACPF domain maps to 1–332 (MALRLPASKA…PPIEELHQFL (332 aa)).

It belongs to the complement C6/C7/C8/C9 (TC 1.C.39) family.

Its function is as follows. Negatively controls the salicylic acid (SA)-mediated pathway of programmed cell death in plant immunity. The chain is MACPF domain-containing protein At4g24290 from Arabidopsis thaliana (Mouse-ear cress).